The following is a 340-amino-acid chain: MNCLVCSARAFNRNYGVMSCFACKMFFRRTVFKNMLFNCKYFKNCTIHYKTHPKCRACRFQKCLNIGMKAASKNDRIVSIGNYEDYNFDKLLNDLIVKNDKNYSNFIDFYSLEDPSLKDIIEDRSIMKLVRRTPETLNDVDQWSNMLAYSRISYFLDFNFIRELDSSDKNTLFKYNVSRAGCLALAMCAYSENKPKLTFPNDVDIFPSEMYNLCGSSTAVLNQVSGQVIAKFIELEIRQEEYLLLLLVMFCNASITNNFSHKTKLILSSHQQVYCSALFRYCQLKYSKSAPTRFTELLSVFGIVNKSVNNMSFLSMMVQCYNPKFNFKRLMQDIFSHTLS.

Residues 1–75 constitute a DNA-binding region (nuclear receptor); that stretch reads MNCLVCSARA…IGMKAASKND (75 aa). NR C4-type zinc fingers lie at residues 3 to 23 and 39 to 58; these read CLVCSARAFNRNYGVMSCFAC and CKYFKNCTIHYKTHPKCRAC. Residues 98 to 337 enclose the NR LBD domain; the sequence is KNDKNYSNFI…KRLMQDIFSH (240 aa).

It belongs to the nuclear hormone receptor family.

The protein resides in the nucleus. In terms of biological role, orphan nuclear receptor. This Caenorhabditis elegans protein is Nuclear hormone receptor family member nhr-268 (nhr-268).